A 256-amino-acid polypeptide reads, in one-letter code: Enkurin (256 aa).

An SH3-binding motif is present at residues 83–89 (PKKPAVP). An Enkurin domain is found at 160–252 (KRNEEIKKAQ…IIEKHKIIYI (93 aa)). The segment at 160-255 (KRNEEIKKAQ…KHKIIYIANN (96 aa)) is interaction with TRPC proteins. Residues 176 to 187 (IQENLKKAAMKR) enclose the IQ domain.

In terms of assembly, microtubule inner protein component of sperm flagellar doublet microtubules. Binds calmodulin via its IQ domain. Interacts with TRPC1, TRPC2, TRPC5, but not TRPC3. Interacts with CFAP45. As to expression, expressed in airway epithelial cells.

The protein resides in the cytoplasm. It is found in the cytoskeleton. Its subcellular location is the cilium axoneme. It localises to the flagellum axoneme. Functionally, adapter that functions to localize a calcium-sensitive signal transduction machinery in sperm to a calcium-permeable ion channel. Microtubule inner protein (MIP) part of the dynein-decorated doublet microtubules (DMTs) in cilia axoneme, which is required for motile cilia beating. The polypeptide is Enkurin (Homo sapiens (Human)).